The chain runs to 297 residues: HTH-type transcriptional regulator ArgP (297 aa).

The HTH lysR-type domain occupies 4–60 (PDYRTLQALDAVIRERGFERAAQKLCITQSAVSQRIKQLENMFGQPLLVRTVPPRPT). A DNA-binding region (H-T-H motif) is located at residues 21–40 (FERAAQKLCITQSAVSQRIK).

It belongs to the LysR transcriptional regulatory family. Homodimer.

Functionally, controls the transcription of genes involved in arginine and lysine metabolism. The polypeptide is HTH-type transcriptional regulator ArgP (Escherichia coli O7:K1 (strain IAI39 / ExPEC)).